Consider the following 129-residue polypeptide: Succinate dehydrogenase assembly factor 3, mitochondrial (129 aa).

The protein belongs to the complex I LYR family. SDHAF3 subfamily. As to quaternary structure, interacts with the iron-sulfur protein subunit within the SDH catalytic dimer.

The protein localises to the mitochondrion matrix. In terms of biological role, plays an essential role in the assembly of succinate dehydrogenase (SDH), an enzyme complex (also referred to as respiratory complex II) that is a component of both the tricarboxylic acid (TCA) cycle and the mitochondrial electron transport chain, and which couples the oxidation of succinate to fumarate with the reduction of ubiquinone (coenzyme Q) to ubiquinol. Promotes maturation of the iron-sulfur protein subunit of the SDH catalytic dimer, protecting it from the deleterious effects of oxidants. May act together with SDHAF1. This Aspergillus fumigatus (strain ATCC MYA-4609 / CBS 101355 / FGSC A1100 / Af293) (Neosartorya fumigata) protein is Succinate dehydrogenase assembly factor 3, mitochondrial.